Consider the following 142-residue polypeptide: Transcription antitermination protein NusB (142 aa).

This sequence belongs to the NusB family.

Involved in transcription antitermination. Required for transcription of ribosomal RNA (rRNA) genes. Binds specifically to the boxA antiterminator sequence of the ribosomal RNA (rrn) operons. The chain is Transcription antitermination protein NusB from Actinobacillus succinogenes (strain ATCC 55618 / DSM 22257 / CCUG 43843 / 130Z).